A 189-amino-acid polypeptide reads, in one-letter code: Peptidyl-tRNA hydrolase (189 aa).

Tyrosine 15 is a binding site for tRNA. The active-site Proton acceptor is histidine 20. TRNA is bound by residues tyrosine 65, asparagine 67, and asparagine 113.

This sequence belongs to the PTH family. As to quaternary structure, monomer.

It is found in the cytoplasm. It catalyses the reaction an N-acyl-L-alpha-aminoacyl-tRNA + H2O = an N-acyl-L-amino acid + a tRNA + H(+). Hydrolyzes ribosome-free peptidyl-tRNAs (with 1 or more amino acids incorporated), which drop off the ribosome during protein synthesis, or as a result of ribosome stalling. In terms of biological role, catalyzes the release of premature peptidyl moieties from peptidyl-tRNA molecules trapped in stalled 50S ribosomal subunits, and thus maintains levels of free tRNAs and 50S ribosomes. The chain is Peptidyl-tRNA hydrolase from Caldicellulosiruptor bescii (strain ATCC BAA-1888 / DSM 6725 / KCTC 15123 / Z-1320) (Anaerocellum thermophilum).